The chain runs to 488 residues: Cobyric acid synthase (488 aa).

In terms of domain architecture, GATase cobBQ-type spans 255-442 (ALKIAVPVLP…LHGLFGSDAY (188 aa)). Cys337 serves as the catalytic Nucleophile. The active site involves His434.

It belongs to the CobB/CobQ family. CobQ subfamily.

It functions in the pathway cofactor biosynthesis; adenosylcobalamin biosynthesis. Catalyzes amidations at positions B, D, E, and G on adenosylcobyrinic A,C-diamide. NH(2) groups are provided by glutamine, and one molecule of ATP is hydrogenolyzed for each amidation. This chain is Cobyric acid synthase, found in Rhizobium johnstonii (strain DSM 114642 / LMG 32736 / 3841) (Rhizobium leguminosarum bv. viciae).